The primary structure comprises 248 residues: Positive alginate biosynthesis regulatory protein (248 aa).

The Response regulatory domain maps to 2–117 (NVLIVDDEPL…DLAEALKKAS (116 aa)). 4-aspartylphosphate is present on Asp-54. An HTH LytTR-type domain is found at 142–247 (ISARTRKGIE…VAGVRRLMHQ (106 aa)).

The protein operates within glycan biosynthesis; alginate biosynthesis [regulation]. In terms of biological role, positive regulator of the algD gene, which codes for a GDP-mannose dehydrogenase, a key step enzyme in the alginate biosynthesis pathway. In Pseudomonas aeruginosa (strain ATCC 15692 / DSM 22644 / CIP 104116 / JCM 14847 / LMG 12228 / 1C / PRS 101 / PAO1), this protein is Positive alginate biosynthesis regulatory protein (algR).